A 213-amino-acid chain; its full sequence is PRA1 family protein B2 (213 aa).

Positions 1–21 (MSSSPAILPVTNQQAATQSQP) are disordered. A run of 5 helical transmembrane segments spans residues 75–94 (LAYF…AFSL), 98–117 (PFSL…LYLF), 137–157 (LLGL…GSLL), 161–181 (LTIG…DDLF), and 190–210 (AGLL…SVVA).

Belongs to the PRA1 family. In terms of assembly, interacts with PRA1B1, PRA1B3, PRA1B4, PRA1B5, PRA1B6 and PRA1E.

Its subcellular location is the endosome membrane. May be involved in both secretory and endocytic intracellular trafficking in the endosomal/prevacuolar compartments. This is PRA1 family protein B2 (PRA1B2) from Arabidopsis thaliana (Mouse-ear cress).